A 349-amino-acid polypeptide reads, in one-letter code: DNA replication and repair protein RecF (349 aa).

Gly-30 to Thr-37 serves as a coordination point for ATP.

It belongs to the RecF family.

The protein localises to the cytoplasm. In terms of biological role, the RecF protein is involved in DNA metabolism; it is required for DNA replication and normal SOS inducibility. RecF binds preferentially to single-stranded, linear DNA. It also seems to bind ATP. The protein is DNA replication and repair protein RecF of Francisella tularensis subsp. mediasiatica (strain FSC147).